We begin with the raw amino-acid sequence, 272 residues long: 3-methyl-2-oxobutanoate hydroxymethyltransferase (272 aa).

2 residues coordinate Mg(2+): D43 and D82. 3-methyl-2-oxobutanoate-binding positions include 43–44 (DS), D82, and K112. E114 provides a ligand contact to Mg(2+). The active-site Proton acceptor is E179.

Belongs to the PanB family. As to quaternary structure, homodecamer; pentamer of dimers. Mg(2+) is required as a cofactor.

It localises to the cytoplasm. It carries out the reaction 3-methyl-2-oxobutanoate + (6R)-5,10-methylene-5,6,7,8-tetrahydrofolate + H2O = 2-dehydropantoate + (6S)-5,6,7,8-tetrahydrofolate. Its pathway is cofactor biosynthesis; (R)-pantothenate biosynthesis; (R)-pantoate from 3-methyl-2-oxobutanoate: step 1/2. Functionally, catalyzes the reversible reaction in which hydroxymethyl group from 5,10-methylenetetrahydrofolate is transferred onto alpha-ketoisovalerate to form ketopantoate. This Staphylococcus aureus (strain COL) protein is 3-methyl-2-oxobutanoate hydroxymethyltransferase.